A 303-amino-acid polypeptide reads, in one-letter code: Diacylglycerol kinase (303 aa).

The DAGKc domain occupies 1–132; the sequence is MKRARIIYNP…IDIGQVNGQY (132 aa). ATP contacts are provided by residues 9–13, threonine 40, 66–72, and threonine 93; these read NPTSG and GDGTINE. 3 residues coordinate Mg(2+): serine 213, aspartate 216, and methionine 218. The active-site Proton acceptor is glutamate 273.

This sequence belongs to the diacylglycerol/lipid kinase family. Requires Mg(2+) as cofactor.

It catalyses the reaction a 1,2-diacyl-sn-glycerol + ATP = a 1,2-diacyl-sn-glycero-3-phosphate + ADP + H(+). The enzyme catalyses 1,2-di-(9Z-octadecenoyl)-sn-glycerol + ATP = 1,2-di-(9Z-octadecenoyl)-sn-glycero-3-phosphate + ADP + H(+). Catalyzes the phosphorylation of diacylglycerol (DAG) into phosphatidic acid. Is a key enzyme involved in the production of lipoteichoic acid by reintroducing DAG formed from the breakdown of membrane phospholipids into the phosphatidylglycerol biosynthetic pathway. Is more active toward long-chain DAG compared with short-chain DAG. Is not able to phosphorylate substrates other than DAG, such as monoacylglycerol, ceramide, undecaprenol, phosphatidylinositol, or sphingosine. The sequence is that of Diacylglycerol kinase (dagK) from Bacillus subtilis (strain 168).